The chain runs to 276 residues: Vitamin B12-binding protein (276 aa).

The signal sequence occupies residues 1–20; that stretch reads MIVRFLCWLTGLLLCTAAYA. Residues 24–273 form the Fe/B12 periplasmic-binding domain; that stretch reads RVISLAPHAT…QLTALSPGSS (250 aa). A disulfide bond links cysteine 186 and cysteine 262.

This sequence belongs to the BtuF family. The complex is composed of two ATP-binding proteins (BtuD), two transmembrane proteins (BtuC) and a solute-binding protein (BtuF).

The protein localises to the periplasm. Functionally, part of the ABC transporter complex BtuCDF involved in vitamin B12 import. Binds vitamin B12 and delivers it to the periplasmic surface of BtuC. This Pectobacterium carotovorum subsp. carotovorum (strain PC1) protein is Vitamin B12-binding protein.